The chain runs to 71 residues: Putative membrane protein insertion efficiency factor (71 aa).

Belongs to the UPF0161 family.

Its subcellular location is the cell membrane. In terms of biological role, could be involved in insertion of integral membrane proteins into the membrane. The protein is Putative membrane protein insertion efficiency factor of Desulforudis audaxviator (strain MP104C).